A 989-amino-acid polypeptide reads, in one-letter code: Phosphoenolpyruvate carboxylase (989 aa).

Residues His-175 and Lys-630 contribute to the active site.

Belongs to the PEPCase type 1 family. The cofactor is Mg(2+).

The enzyme catalyses oxaloacetate + phosphate = phosphoenolpyruvate + hydrogencarbonate. Functionally, forms oxaloacetate, a four-carbon dicarboxylic acid source for the tricarboxylic acid cycle. The protein is Phosphoenolpyruvate carboxylase of Prochlorococcus marinus (strain AS9601).